We begin with the raw amino-acid sequence, 239 residues long: Pyridoxine 5'-phosphate synthase (239 aa).

Asn7 contacts 3-amino-2-oxopropyl phosphate. Position 9-10 (9-10 (DH)) interacts with 1-deoxy-D-xylulose 5-phosphate. Arg18 contributes to the 3-amino-2-oxopropyl phosphate binding site. His43 serves as the catalytic Proton acceptor. The 1-deoxy-D-xylulose 5-phosphate site is built by Arg45 and His50. Glu70 functions as the Proton acceptor in the catalytic mechanism. Thr100 lines the 1-deoxy-D-xylulose 5-phosphate pocket. His191 serves as the catalytic Proton donor. 3-amino-2-oxopropyl phosphate-binding positions include Gly192 and 213-214 (GH).

The protein belongs to the PNP synthase family. As to quaternary structure, homooctamer; tetramer of dimers.

It is found in the cytoplasm. The catalysed reaction is 3-amino-2-oxopropyl phosphate + 1-deoxy-D-xylulose 5-phosphate = pyridoxine 5'-phosphate + phosphate + 2 H2O + H(+). Its pathway is cofactor biosynthesis; pyridoxine 5'-phosphate biosynthesis; pyridoxine 5'-phosphate from D-erythrose 4-phosphate: step 5/5. In terms of biological role, catalyzes the complicated ring closure reaction between the two acyclic compounds 1-deoxy-D-xylulose-5-phosphate (DXP) and 3-amino-2-oxopropyl phosphate (1-amino-acetone-3-phosphate or AAP) to form pyridoxine 5'-phosphate (PNP) and inorganic phosphate. This is Pyridoxine 5'-phosphate synthase from Trichlorobacter lovleyi (strain ATCC BAA-1151 / DSM 17278 / SZ) (Geobacter lovleyi).